Here is a 430-residue protein sequence, read N- to C-terminus: Paraneoplastic antigen-like protein 8A (430 aa).

Basic and acidic residues predominate over residues 219 to 228; the sequence is WKNTEDHGDP. Disordered regions lie at residues 219 to 270, 313 to 364, and 392 to 430; these read WKNT…NSNY, DPSD…RKKK, and GLGA…SRKL. Positions 232-250 are enriched in basic residues; sequence LVRRPGGKIRSRRRKQKKN. The span at 261–270 shows a compositional bias: polar residues; the sequence is SQGSNYNSNY.

The protein belongs to the PNMA family.

This is Paraneoplastic antigen-like protein 8A from Mus musculus (Mouse).